Here is a 515-residue protein sequence, read N- to C-terminus: BURP domain-containing protein 9 (515 aa).

Residues 1 to 29 (MKATGGPLPLILFLLIIIVLITAQHTAIA) form the signal peptide. A BURP domain is found at 292-507 (YFFEDNLAPG…GRGSIIWVPV (216 aa)). N-linked (GlcNAc...) asparagine glycosylation is found at asparagine 321, asparagine 332, and asparagine 470.

Expressed in shoot and panicles.

The chain is BURP domain-containing protein 9 (BURP9) from Oryza sativa subsp. japonica (Rice).